Reading from the N-terminus, the 239-residue chain is uncharacterized protein (239 aa).

A dksA C4-type; degenerate zinc finger spans residues 94 to 114 (CEVSGKEIPFERLEALPTATT). The span at 133–158 (ETPFGQFEFDDDEEIRAPYDSEDSYQ) shows a compositional bias: acidic residues. The interval 133-182 (ETPFGQFEFDDDEEIRAPYDSEDSYQDVEKYGNSQTPQDMENPPLSYDDM) is disordered.

This is an uncharacterized protein from Bacillus subtilis (strain 168).